Reading from the N-terminus, the 285-residue chain is 1,4-dihydroxy-2-naphthoyl-CoA synthase (285 aa).

Substrate-binding positions include Arg-45, 84–88 (AGGDQ), Tyr-97, 129–133 (YSIGG), Thr-155, Ser-161, Tyr-258, and Lys-273. 154–156 (QTG) is a binding site for hydrogencarbonate.

It belongs to the enoyl-CoA hydratase/isomerase family. MenB subfamily. In terms of assembly, homohexamer. Hydrogencarbonate is required as a cofactor.

The catalysed reaction is 2-succinylbenzoyl-CoA + H(+) = 1,4-dihydroxy-2-naphthoyl-CoA + H2O. Its pathway is quinol/quinone metabolism; 1,4-dihydroxy-2-naphthoate biosynthesis; 1,4-dihydroxy-2-naphthoate from chorismate: step 6/7. The protein operates within quinol/quinone metabolism; menaquinone biosynthesis. Functionally, converts o-succinylbenzoyl-CoA (OSB-CoA) to 1,4-dihydroxy-2-naphthoyl-CoA (DHNA-CoA). The protein is 1,4-dihydroxy-2-naphthoyl-CoA synthase of Salmonella typhimurium (strain LT2 / SGSC1412 / ATCC 700720).